The sequence spans 183 residues: dCTP deaminase (183 aa).

DCTP is bound by residues 97–102 (RSSFAR) and Asp113. Residue Glu123 is the Proton donor/acceptor of the active site. Residues Tyr155 and Gln162 each coordinate dCTP.

It belongs to the dCTP deaminase family. In terms of assembly, homotrimer.

The enzyme catalyses dCTP + H2O + H(+) = dUTP + NH4(+). Its pathway is pyrimidine metabolism; dUMP biosynthesis; dUMP from dCTP (dUTP route): step 1/2. Catalyzes the deamination of dCTP to dUTP. The chain is dCTP deaminase from Sulfurisphaera tokodaii (strain DSM 16993 / JCM 10545 / NBRC 100140 / 7) (Sulfolobus tokodaii).